Here is a 576-residue protein sequence, read N- to C-terminus: Laccase-1 (576 aa).

The first 19 residues, 1–19 (MARTTFLVSVSLFVSAVLA), serve as a signal peptide directing secretion. Plastocyanin-like domains follow at residues 21 to 145 (TVEY…LVIY) and 157 to 304 (VDDE…LVYE). An N-linked (GlcNAc...) asparagine glycan is attached at Asn41. Residues His82, His84, His127, and His129 each coordinate Cu cation. Residues Cys103 and Cys562 are joined by a disulfide bond. 4 N-linked (GlcNAc...) asparagine glycosylation sites follow: Asn182, Asn228, Asn294, and Asn368. The region spanning 376–576 (DESKLVPLEY…NWLKSNPGQL (201 aa)) is the Plastocyanin-like 3 domain. Cu cation contacts are provided by His471, His474, His476, His523, Cys524, His525, and His529.

The protein belongs to the multicopper oxidase family. In terms of assembly, homodimer. It depends on Cu cation as a cofactor. In terms of tissue distribution, in mycelia, at a lower level than LCC4.

It localises to the secreted. It catalyses the reaction 4 hydroquinone + O2 = 4 benzosemiquinone + 2 H2O. Its function is as follows. Lignin degradation and detoxification of lignin-derived products. This Thanatephorus cucumeris (Black scurf of potato) protein is Laccase-1 (LCC1).